The sequence spans 117 residues: Big defensin (117 aa).

A signal peptide spans 1-23 (MEKKTAYCLLFLVLLVPYTALGA). Residues 24-33 (VLKRAPAKKE) constitute a propeptide that is removed on maturation. Intrachain disulfides connect C82/C112, C89/C107, and C93/C113.

This sequence belongs to the big defensin family.

It is found in the secreted. In terms of biological role, significantly inhibits the growth of Gram-negative and Gram-positive bacteria and fungi in vitro. The polypeptide is Big defensin (Branchiostoma belcheri (Amphioxus)).